Consider the following 375-residue polypeptide: Protein kinase MCK1 (375 aa).

S2 is subject to N-acetylserine. Positions 35 to 327 (VKEYRKIGRG…PRRILAHQFF (293 aa)) constitute a Protein kinase domain. ATP is bound by residues 41-49 (IGRGAFGTV) and K68. The active-site Proton acceptor is D164. S198 carries the post-translational modification Phosphoserine. Phosphotyrosine is present on Y199. S202 carries the post-translational modification Phosphoserine.

The protein belongs to the protein kinase superfamily. Ser/Thr protein kinase family. Post-translationally, phosphorylated at tyrosine and serine.

The enzyme catalyses L-seryl-[protein] + ATP = O-phospho-L-seryl-[protein] + ADP + H(+). It carries out the reaction L-threonyl-[protein] + ATP = O-phospho-L-threonyl-[protein] + ADP + H(+). It catalyses the reaction L-tyrosyl-[protein] + ATP = O-phospho-L-tyrosyl-[protein] + ADP + H(+). In terms of biological role, may be an autophosphorylating tyrosine kinase, a bifunctional (serine/tyrosine-specific) protein kinase, or a serine kinase that is a substrate for an associated tyrosine kinase. MCK1 is a transcriptional activator of IME1, it stimulates spore maturation, and play a positive regulatory role in both mitotic centromere function and activation of early meiotic gene expression. This chain is Protein kinase MCK1 (MCK1), found in Saccharomyces cerevisiae (strain ATCC 204508 / S288c) (Baker's yeast).